Reading from the N-terminus, the 379-residue chain is Homoserine O-succinyltransferase (379 aa).

In terms of domain architecture, AB hydrolase-1 spans 51–360 (NAVLICHALS…DAPQGHDAFL (310 aa)). Catalysis depends on Ser-157, which acts as the Nucleophile. Residue Arg-227 coordinates substrate. Residues Asp-323 and His-356 contribute to the active site. Substrate is bound at residue Asp-357.

Belongs to the AB hydrolase superfamily. MetX family. In terms of assembly, homodimer.

It localises to the cytoplasm. It carries out the reaction L-homoserine + succinyl-CoA = O-succinyl-L-homoserine + CoA. Its pathway is amino-acid biosynthesis; L-methionine biosynthesis via de novo pathway; O-succinyl-L-homoserine from L-homoserine: step 1/1. Functionally, transfers a succinyl group from succinyl-CoA to L-homoserine, forming succinyl-L-homoserine. This is Homoserine O-succinyltransferase from Ectopseudomonas mendocina (strain ymp) (Pseudomonas mendocina).